The primary structure comprises 193 residues: Potassium-transporting ATPase KdpC subunit (193 aa).

The helical transmembrane segment at 9-29 threads the bilayer; it reads VLMTVVTTVLLGLVYPLLITG.

It belongs to the KdpC family. As to quaternary structure, the system is composed of three essential subunits: KdpA, KdpB and KdpC.

Its subcellular location is the cell inner membrane. Functionally, part of the high-affinity ATP-driven potassium transport (or Kdp) system, which catalyzes the hydrolysis of ATP coupled with the electrogenic transport of potassium into the cytoplasm. This subunit acts as a catalytic chaperone that increases the ATP-binding affinity of the ATP-hydrolyzing subunit KdpB by the formation of a transient KdpB/KdpC/ATP ternary complex. The sequence is that of Potassium-transporting ATPase KdpC subunit from Koribacter versatilis (strain Ellin345).